The chain runs to 290 residues: Glycine--tRNA ligase alpha subunit (290 aa).

Belongs to the class-II aminoacyl-tRNA synthetase family. Tetramer of two alpha and two beta subunits.

The protein resides in the cytoplasm. The catalysed reaction is tRNA(Gly) + glycine + ATP = glycyl-tRNA(Gly) + AMP + diphosphate. This is Glycine--tRNA ligase alpha subunit from Brachyspira hyodysenteriae (strain ATCC 49526 / WA1).